The primary structure comprises 1267 residues: Clustered mitochondria protein homolog (1267 aa).

TPR repeat units lie at residues 64–102, 420–453, 716–749, 795–830, 904–939, 1010–1043, and 1138–1171; these read YNLKNSTGDLLLSSEEKTLRELCSDKDEYKVALELKPYN, YSFVGDLNQTYADKGGDEAAIASANQDLRTLNML, EAHEAKLAQVIVDNKEYEEWEKSYLQKIETMIKE, LVPLIKTAELEIISRSLKHILRKYSRSLPPIVIPAL, RSICNKFGVQLLNKDYFFSTEQLEEYKQSLDKKSRA, AEKYLTLSTIYNKLGLNAEAIAFCRKSCAIYERV, and AYIKSKLGNLLAADNRFSDALNQIKVAERIFTKE. Residues 329-586 enclose the Clu domain; it reads PTNGPDYLRT…NTYPLDVEFA (258 aa). Over residues 1203 to 1219 the composition is skewed to polar residues; it reads QQDQTAASGLKQQPQKS. The segment at 1203 to 1267 is disordered; sequence QQDQTAASGL…KSKSKGKNKK (65 aa). The span at 1224 to 1239 shows a compositional bias: basic and acidic residues; sequence NKKETTNPDLADKSVD. A compositionally biased stretch (basic residues) spans 1254–1267; the sequence is KTTKKSKSKGKNKK.

The protein belongs to the CLU family. May associate with the eukaryotic translation initiation factor 3 (eIF-3) complex.

Its subcellular location is the cytoplasm. Functionally, mRNA-binding protein involved in proper cytoplasmic distribution of mitochondria. The protein is Clustered mitochondria protein homolog of Candida glabrata (strain ATCC 2001 / BCRC 20586 / JCM 3761 / NBRC 0622 / NRRL Y-65 / CBS 138) (Yeast).